We begin with the raw amino-acid sequence, 1372 residues long: DNA-directed RNA polymerase subunit beta (1372 aa).

This sequence belongs to the RNA polymerase beta chain family. In terms of assembly, the RNAP catalytic core consists of 2 alpha, 1 beta, 1 beta' and 1 omega subunit. When a sigma factor is associated with the core the holoenzyme is formed, which can initiate transcription.

The enzyme catalyses RNA(n) + a ribonucleoside 5'-triphosphate = RNA(n+1) + diphosphate. In terms of biological role, DNA-dependent RNA polymerase catalyzes the transcription of DNA into RNA using the four ribonucleoside triphosphates as substrates. In Psychrobacter sp. (strain PRwf-1), this protein is DNA-directed RNA polymerase subunit beta.